Here is a 352-residue protein sequence, read N- to C-terminus: Cyclin-dependent kinase-like 1 (352 aa).

Residues 4–287 form the Protein kinase domain; the sequence is YEKIGKIGEG…CEQLLQHPYF (284 aa). ATP-binding positions include 10 to 18 and lysine 33; that span reads IGEGSYGVV. Residues 45–51 carry the [NKR]KIAxRE motif; that stretch reads KKIALRE. The active-site Proton acceptor is aspartate 126.

The protein belongs to the protein kinase superfamily. CMGC Ser/Thr protein kinase family. CDC2/CDKX subfamily.

The protein resides in the cytoplasm. It localises to the nucleus. It catalyses the reaction L-seryl-[protein] + ATP = O-phospho-L-seryl-[protein] + ADP + H(+). The catalysed reaction is L-threonyl-[protein] + ATP = O-phospho-L-threonyl-[protein] + ADP + H(+). This is Cyclin-dependent kinase-like 1 from Mus musculus (Mouse).